Reading from the N-terminus, the 192-residue chain is LOB domain-containing protein 32 (192 aa).

The 102-residue stretch at 4–105 folds into the LOB domain; it reads NRCAVCKILN…QDIESAVNEL (102 aa).

The protein belongs to the LOB domain-containing protein family.

In Arabidopsis thaliana (Mouse-ear cress), this protein is LOB domain-containing protein 32 (LBD32).